A 769-amino-acid chain; its full sequence is Serine/threonine-protein kinase PLK4 (769 aa).

Residues 14 to 267 (YEVQHLLGKG…LEAVLCHPFM (254 aa)) form the Protein kinase domain. Residues 20 to 28 (LGKGGFATV) and Lys-43 each bind ATP. The active-site Proton acceptor is Asp-138. In terms of domain architecture, Cryptic POLO box 1 (CPB1) spans 381-498 (EDRISVPPLN…ARFVGLVKSK (118 aa)). In terms of domain architecture, Cryptic POLO box 2 (CPB2) spans 499–602 (TPKVTYFSTL…GRRPITDVQP (104 aa)). The 80-residue stretch at 660 to 739 (PIKRINVPDI…IPNIQLKLKT (80 aa)) folds into the POLO box domain.

Belongs to the protein kinase superfamily. Ser/Thr protein kinase family. CDC5/Polo subfamily. As to quaternary structure, homodimer. Ubiquitinated by the SCF(Slimb) ubiquitin ligase complex; leading to its degradation by the proteasome during interphase and regulating centriole number and ensuring the block to centriole reduplication.

It localises to the cytoplasm. The protein localises to the cytoskeleton. Its subcellular location is the microtubule organizing center. The protein resides in the centrosome. It is found in the centriole. It catalyses the reaction L-seryl-[protein] + ATP = O-phospho-L-seryl-[protein] + ADP + H(+). The enzyme catalyses L-threonyl-[protein] + ATP = O-phospho-L-threonyl-[protein] + ADP + H(+). Serine/threonine-protein kinase that plays a central role in centriole duplication. Able to trigger procentriole formation on the surface of the mother centriole cylinder, using mother centriole as a platform, leading to the recruitment of centriole biogenesis proteins such as sas-6. When overexpressed, it is able to induce centrosome amplification through the simultaneous generation of multiple procentrioles adjoining each parental centriole during S phase. Centrosome amplification following overexpression can initiate tumorigenesis, highlighting the importance of centrosome regulation in cancers. The polypeptide is Serine/threonine-protein kinase PLK4 (SAK) (Drosophila sechellia (Fruit fly)).